Consider the following 311-residue polypeptide: HPr kinase/phosphorylase (311 aa).

Residues His-138 and Lys-159 contribute to the active site. Residue 153–160 (GDSGIGKS) coordinates ATP. Mg(2+) is bound at residue Ser-160. Asp-177 serves as the catalytic Proton acceptor; for phosphorylation activity. Proton donor; for dephosphorylation activity. The important for the catalytic mechanism of both phosphorylation and dephosphorylation stretch occupies residues 201–210 (IEIRGVGIID). A Mg(2+)-binding site is contributed by Glu-202. The active site involves Arg-243. The segment at 264-269 (PVKTGR) is important for the catalytic mechanism of dephosphorylation.

Belongs to the HPrK/P family. As to quaternary structure, homohexamer. Mg(2+) is required as a cofactor.

The catalysed reaction is [HPr protein]-L-serine + ATP = [HPr protein]-O-phospho-L-serine + ADP + H(+). It carries out the reaction [HPr protein]-O-phospho-L-serine + phosphate + H(+) = [HPr protein]-L-serine + diphosphate. Its function is as follows. Catalyzes the ATP- as well as the pyrophosphate-dependent phosphorylation of a specific serine residue in HPr, a phosphocarrier protein of the phosphoenolpyruvate-dependent sugar phosphotransferase system (PTS). HprK/P also catalyzes the pyrophosphate-producing, inorganic phosphate-dependent dephosphorylation (phosphorolysis) of seryl-phosphorylated HPr (P-Ser-HPr). The two antagonistic activities of HprK/P are regulated by several intracellular metabolites, which change their concentration in response to the absence or presence of rapidly metabolisable carbon sources (glucose, fructose, etc.) in the growth medium. Therefore, by controlling the phosphorylation state of HPr, HPrK/P is a sensor enzyme that plays a major role in the regulation of carbon metabolism and sugar transport: it mediates carbon catabolite repression (CCR), and regulates PTS-catalyzed carbohydrate uptake and inducer exclusion. This chain is HPr kinase/phosphorylase, found in Streptococcus pneumoniae serotype 2 (strain D39 / NCTC 7466).